Consider the following 51-residue polypeptide: Ribosome biogenesis protein Nop10 (51 aa).

This sequence belongs to the NOP10 family.

In terms of biological role, involved in ribosome biogenesis; more specifically in 18S rRNA pseudouridylation and in cleavage of pre-rRNA. In Methanococcus aeolicus (strain ATCC BAA-1280 / DSM 17508 / OCM 812 / Nankai-3), this protein is Ribosome biogenesis protein Nop10.